Consider the following 766-residue polypeptide: Disabled homolog 2 (766 aa).

Positions 1–16 (MSNEVETSTTNGQPDQ) are enriched in polar residues. Residues 1 to 36 (MSNEVETSTTNGQPDQQAAPKAPSKKEKKKGSEKTD) are disordered. Serine 2 carries the N-acetylserine modification. Serine 2 bears the Phosphoserine mark. The 152-residue stretch at 45–196 (GDGVKYKAKL…KAEENGSEAL (152 aa)) folds into the PID domain. Tyrosine 170 is subject to Phosphotyrosine. A Phosphoserine modification is found at serine 193. Residues 230–447 (ESKDILLVDL…KPGRGRRTAK (218 aa)) are required for localization to clathrin-coated pits. 4 disordered regions span residues 284–482 (LNFF…NFLD), 596–630 (PPPT…LKDI), 659–683 (RQPP…FSSY), and 699–766 (DFDA…NPFA). 2 short sequence motifs (DPF) span residues 293 to 295 (DPF) and 298 to 300 (DPF). Polar residues-rich tracts occupy residues 303–334 (PDQS…QSKG) and 367–381 (PSSQ…QNGV). Position 323 is a phosphoserine (serine 323). 2 positions are modified to phosphoserine; in mitosis: serine 326 and serine 328. Serine 401 is modified (phosphoserine). The segment covering 467–480 (MSPTGQPAVPQSNF) has biased composition (polar residues). Residues 600 to 612 (MSTQSSPQPMMSS) show a composition bias toward low complexity. Residues 600-730 (MSTQSSPQPM…VLLGTKSADN (131 aa)) form a sufficient for interaction with GRB2 region. Residues 617-625 (PPQPPPRNG) form a required for interaction with CSK region. Residues 647 to 766 (KEVKEMFKDF…HRSPFGNPFA (120 aa)) form a required for interaction with MYO6 region. A required for interaction with GRB2 and CSK region spans residues 661-669 (PPLVPSRKG). Threonine 671 bears the Phosphothreonine mark. The segment covering 673-683 (PSGTSSAFSSY) has biased composition (polar residues). The sufficient for interaction with SH3KBP1 SH3 domain stretch occupies residues 707–723 (NKINEPPKPAPRQGVLL). Phosphoserine occurs at positions 727 and 759. Polar residues predominate over residues 727 to 753 (SADNSLENPFSKGFSSSNPSVVSQPAS).

As to quaternary structure, interacts (via NPXY motif) with DAB2 (via PID domain). Can interact (via PID domain) with LDLR, APP, APLP1 and APLP2, and weakly with INPP5D (via NPXY motifs); the interaction is impaired by tyrosine phosphorylation of the respective NPXY motifs. Can weakly interact (via PID domain) with LRP1 (via NPXY motif); the interaction is enhanced by tyrosine phosphorylation of the NPXY motif. Interacts with LRP2 (via NPXY motif); the interaction is not affected by tyrosine phosphorylation of the NPXY motif. Interacts with clathrin; in vitro can assemble clathrin triskelia into polyhedral coats. Interacts with AP2A2, ITGB1, ITGB3, ITGB5, PIAS2, DAB2IP, NOSTRIN, FCHO1, DVL3 and EPS15L1. Interacts with SH3KBP1 (via SH3 domains). Interacts with GRB2; competes with SOS1 for binding to GRB2 and the interaction is enhanced by EGF and NT-3 stimulation. Isoform p96 interacts with EPS15 and ITSN1; isoform p67 does not interact with EPS15 and only weakly interacts with ITSN1. Interacts with MAP3K7; the interaction is induced by TGF-beta stimulation and may mediate TGF-beta stimulated JNK activation. Interacts with AXIN1 and PPP1CA; the interactions are mutually exclusive. Interacts with the globular tail of MYO6. Interacts (via DPF motifs) with FCHO2; the interaction is direct and required for DAB2-mediated LDLR endocytosis. Interacts with LRP6; the interaction involves LRP6 phosphorylation by CK2 and sequesters LRP6 towards clathrin-mediated endocytosis. Associates with the TGF-beta receptor complex. Interacts with SMAD2 and SMAD3; the interactions are enhanced upon TGF-beta stimulation. Interacts with GRB2; the interaction is enhanced by EGF and NT-3 stimulation. Interacts with SRC; the interaction is enhanced by EGF stimulation. In terms of processing, phosphorylated on serine residues in response to mitogenic growth-factor stimulation. Phosphorylation during mitosis is leading to membrane displacement. As to expression, isoform p96 and isoform p67 are expressed in adult kidney and fibroblasts with isoform p96 being the predominant form. Isoform p67 is the predominant isoform expressed in embryonic visceral endoderm.

Its subcellular location is the cytoplasmic vesicle. The protein resides in the clathrin-coated vesicle membrane. It is found in the membrane. It localises to the clathrin-coated pit. The protein localises to the cytoplasm. Its subcellular location is the nucleus. Adapter protein that functions as a clathrin-associated sorting protein (CLASP) required for clathrin-mediated endocytosis of selected cargo proteins. Can bind and assemble clathrin, and binds simultaneously to phosphatidylinositol 4,5-bisphosphate (PtdIns(4,5)P2) and cargos containing non-phosphorylated NPXY internalization motifs, such as the LDL receptor, to recruit them to clathrin-coated pits. Can function in clathrin-mediated endocytosis independently of the AP-2 complex. Involved in endocytosis of integrin beta-1; this function seems to redundant with the AP-2 complex and seems to require DAB2 binding to endocytosis accessory EH domain-containing proteins such as EPS15, EPS15L1 and ITSN1. Involved in endocytosis of cystic fibrosis transmembrane conductance regulator/CFTR. Isoform p96 is involved in endocytosis of megalin/LRP2 lipoprotein receptor during embryonal development. Required for recycling of the TGF-beta receptor. Isoform p67 is not involved in LDL receptor endocytosis. Involved in CFTR trafficking to the late endosome. Involved in several receptor-mediated signaling pathways. Involved in TGF-beta receptor signaling and facilitates phosphorylation of the signal transducer SMAD2. Mediates TFG-beta-stimulated JNK activation. May inhibit the canoniocal Wnt/beta-catenin signaling pathway by stabilizing the beta-catenin destruction complex through a competing association with axin preventing its dephosphorylation through protein phosphatase 1 (PP1). Sequesters LRP6 towards clathrin-mediated endocytosis, leading to inhibition of Wnt/beta-catenin signaling. May activate non-canonical Wnt signaling. In cell surface growth factor/Ras signaling pathways proposed to inhibit ERK activation by interrupting the binding of GRB2 to SOS1 and to inhibit SRC by preventing its activating phosphorylation at 'Tyr-419'. Proposed to be involved in modulation of androgen receptor (AR) signaling mediated by SRC activation; seems to compete with AR for interaction with SRC. Plays a role in the CSF-1 signal transduction pathway. Plays a role in cellular differentiation. Involved in cell positioning and formation of visceral endoderm (VE) during embryogenesis and proposed to be required in the VE to respond to Nodal signaling coming from the epiblast. Required for the epithelial to mesenchymal transition, a process necessary for proper embryonic development. May be involved in myeloid cell differentiation and can induce macrophage adhesion and spreading. Isoform p67 may be involved in transcriptional regulation. May act as a tumor suppressor. The protein is Disabled homolog 2 (Dab2) of Mus musculus (Mouse).